The chain runs to 307 residues: Elongation factor Ts (307 aa).

The tract at residues 80–83 is involved in Mg(2+) ion dislocation from EF-Tu; sequence TDFV.

This sequence belongs to the EF-Ts family.

Its subcellular location is the cytoplasm. Associates with the EF-Tu.GDP complex and induces the exchange of GDP to GTP. It remains bound to the aminoacyl-tRNA.EF-Tu.GTP complex up to the GTP hydrolysis stage on the ribosome. In Rhodopseudomonas palustris (strain BisA53), this protein is Elongation factor Ts.